A 659-amino-acid polypeptide reads, in one-letter code: Macrolide export ATP-binding/permease protein MacB (659 aa).

An ABC transporter domain is found at 10 to 249 (IELRGIRKRY…QPLLHHAGLS (240 aa)). Residue 47-54 (GSSGSGKS) coordinates ATP. The next 4 membrane-spanning stretches (helical) occupy residues 287-307 (SLTL…LAIG), 538-558 (LGLV…NVML), 594-614 (ITGG…LVFW), and 619-639 (VFSF…GLIF).

This sequence belongs to the ABC transporter superfamily. Macrolide exporter (TC 3.A.1.122) family. In terms of assembly, homodimer.

It localises to the cell inner membrane. Non-canonical ABC transporter that contains transmembrane domains (TMD), which form a pore in the inner membrane, and an ATP-binding domain (NBD), which is responsible for energy generation. Confers resistance against macrolides. This chain is Macrolide export ATP-binding/permease protein MacB, found in Nitrosomonas europaea (strain ATCC 19718 / CIP 103999 / KCTC 2705 / NBRC 14298).